We begin with the raw amino-acid sequence, 180 residues long: Acireductone dioxygenase (180 aa).

Fe(2+) contacts are provided by His96, His98, Glu102, and His140. His96, His98, Glu102, and His140 together coordinate Ni(2+).

Belongs to the acireductone dioxygenase (ARD) family. Monomer. It depends on Fe(2+) as a cofactor. Requires Ni(2+) as cofactor.

It carries out the reaction 1,2-dihydroxy-5-(methylsulfanyl)pent-1-en-3-one + O2 = 3-(methylsulfanyl)propanoate + CO + formate + 2 H(+). It catalyses the reaction 1,2-dihydroxy-5-(methylsulfanyl)pent-1-en-3-one + O2 = 4-methylsulfanyl-2-oxobutanoate + formate + 2 H(+). The protein operates within amino-acid biosynthesis; L-methionine biosynthesis via salvage pathway; L-methionine from S-methyl-5-thio-alpha-D-ribose 1-phosphate: step 5/6. Its function is as follows. Catalyzes 2 different reactions between oxygen and the acireductone 1,2-dihydroxy-3-keto-5-methylthiopentene (DHK-MTPene) depending upon the metal bound in the active site. Fe-containing acireductone dioxygenase (Fe-ARD) produces formate and 2-keto-4-methylthiobutyrate (KMTB), the alpha-ketoacid precursor of methionine in the methionine recycle pathway. Ni-containing acireductone dioxygenase (Ni-ARD) produces methylthiopropionate, carbon monoxide and formate, and does not lie on the methionine recycle pathway. This is Acireductone dioxygenase from Synechococcus sp. (strain WH7803).